Consider the following 384-residue polypeptide: tRNA-dihydrouridine(20) synthase [NAD(P)+] (384 aa).

Residues 12–14 (PMV) and Q88 contribute to the FMN site. The Proton donor role is filled by C117. FMN-binding positions include K160, H188, 222 to 224 (NGA), and 249 to 250 (AE). Residues 359–384 (KQKRKQTDHIGSDTKKQKVVPLPTDI) form a disordered region. Positions 363–374 (KQTDHIGSDTKK) are enriched in basic and acidic residues.

This sequence belongs to the Dus family. Dus2 subfamily. In terms of assembly, monomer. FMN is required as a cofactor. Post-translationally, N-glycosylated.

It localises to the cytoplasm. The protein localises to the nucleus. It carries out the reaction 5,6-dihydrouridine(20) in tRNA + NADP(+) = uridine(20) in tRNA + NADPH + H(+). It catalyses the reaction 5,6-dihydrouridine(20) in tRNA + NAD(+) = uridine(20) in tRNA + NADH + H(+). The catalysed reaction is a 5,6-dihydrouridine in mRNA + NAD(+) = a uridine in mRNA + NADH + H(+). The enzyme catalyses a 5,6-dihydrouridine in mRNA + NADP(+) = a uridine in mRNA + NADPH + H(+). In terms of biological role, catalyzes the NADPH-dependent synthesis of dihydrouridine, a modified base found in the D-loop of most tRNAs. Specifically modifies U20 in cytoplasmic tRNAs. Also able to mediate dihydrouridylation of some mRNAs, thereby affecting their translation. The protein is tRNA-dihydrouridine(20) synthase [NAD(P)+] (SMM1) of Saccharomyces cerevisiae (strain ATCC 204508 / S288c) (Baker's yeast).